The sequence spans 230 residues: Small ribosomal subunit protein uS7m (230 aa).

The protein belongs to the universal ribosomal protein uS7 family. In terms of assembly, part of the small ribosomal subunit.

The protein localises to the mitochondrion. Functionally, one of the primary rRNA binding proteins, it binds directly to 18S rRNA where it nucleates assembly of the head domain of the small subunit. The polypeptide is Small ribosomal subunit protein uS7m (RPS7) (Marchantia polymorpha (Common liverwort)).